A 468-amino-acid chain; its full sequence is Putative FBD-associated F-box protein At5g22720 (468 aa).

Residues 22-68 (EDLISQLPDSLITQILFYLQTKKAVTTSVLSKRWRSLWLSTPGLVLI) form the F-box domain. In terms of domain architecture, FBD spans 375–433 (ELRLSFVPRCLLSSLEFVEIKGCSRSNMERVKYVGEPIETKLARYFVENSTILKKLVLP).

This is Putative FBD-associated F-box protein At5g22720 from Arabidopsis thaliana (Mouse-ear cress).